The sequence spans 349 residues: Phenylalanine--tRNA ligase alpha subunit (349 aa).

A Mg(2+)-binding site is contributed by glutamate 259.

The protein belongs to the class-II aminoacyl-tRNA synthetase family. Phe-tRNA synthetase alpha subunit type 1 subfamily. In terms of assembly, tetramer of two alpha and two beta subunits. Mg(2+) is required as a cofactor.

The protein resides in the cytoplasm. The enzyme catalyses tRNA(Phe) + L-phenylalanine + ATP = L-phenylalanyl-tRNA(Phe) + AMP + diphosphate + H(+). This chain is Phenylalanine--tRNA ligase alpha subunit, found in Lactobacillus delbrueckii subsp. bulgaricus (strain ATCC 11842 / DSM 20081 / BCRC 10696 / JCM 1002 / NBRC 13953 / NCIMB 11778 / NCTC 12712 / WDCM 00102 / Lb 14).